Reading from the N-terminus, the 20-residue chain is Ribulose bisphosphate carboxylase small subunit (20 aa).

Belongs to the RuBisCO small chain family. In terms of assembly, heterohexadecamer of 8 large and 8 small subunits.

Its subcellular location is the plastid. It localises to the chloroplast. Its function is as follows. RuBisCO catalyzes two reactions: the carboxylation of D-ribulose 1,5-bisphosphate, the primary event in carbon dioxide fixation, as well as the oxidative fragmentation of the pentose substrate in the photorespiration process. Both reactions occur simultaneously and in competition at the same active site. Although the small subunit is not catalytic it is essential for maximal activity. The chain is Ribulose bisphosphate carboxylase small subunit from Chattonella marina var. antiqua (Red tide flagellate).